Reading from the N-terminus, the 984-residue chain is Ubiquitin conjugation factor E4 ufd-2 (984 aa).

In terms of domain architecture, U-box spans 909 to 982; the sequence is DVPEEFKDPI…QEWICQKRNS (74 aa).

It belongs to the ubiquitin conjugation factor E4 family. In terms of assembly, forms a complex composed of deubiquitinating enzyme atx-3, E4 ubiquitin-protein ligase ufd-2 and cdc-48.1; within the complex interacts with atx-3 and cdc-48.1 (via DDDLYN motif). Forms a complex composed of cdc-48.1, myosin chaperone unc-45, ubiquitin-protein ligases ufd-2 and chn-1; the complex targets myosin chaperone unc-45 for proteasomal degradation; within the complex interacts with cdc-48.1 (via DDDLYN motif), chn-1 and unc-45. Forms a complex composed of unc-45 and myosin heavy chain B unc-54; the complex targets unfolded unc-54 for proteasomal degradation; within the complex interacts with unc-45 (via TPR domain) and unc-54. Interacts with cdc-48.2 (via DDDLYN motif). In terms of tissue distribution, expressed in the germline (at protein level).

It localises to the cytoplasm. It is found in the nucleus membrane. The protein localises to the nucleus. Its subcellular location is the nucleolus. It carries out the reaction S-ubiquitinyl-[E2 ubiquitin-conjugating enzyme]-L-cysteine + [acceptor protein]-L-lysine = [E2 ubiquitin-conjugating enzyme]-L-cysteine + N(6)-ubiquitinyl-[acceptor protein]-L-lysine.. It participates in protein modification; protein ubiquitination. Its function is as follows. Acts as an E4 ubiquitin ligase mediating the assembly of polyubiquitin chains on substrates ubiquitinated by another E3 ubiquitin ligase. The elongation of preexisting ubiquitin chains preferentially targets ubiquitin 'Lys-29' and 'Lys-48' residues. Also functions as an E3 ligase in conjunction with specific E1 and E2 ligases. Probably by regulating protein ubiquitination at DNA damage repair sites, coordinates DNA double-strand-break repair and apoptosis in the germline. Required for germline apoptosis in response to DNA damage downstream of cep-1. Involved in the resolution of DNA-repair sites by promoting the release of rad-51 from DNA damage foci. In association with protein-ligase chn-1, acts as an E3/E4 ligase to poly-ubiquitinate lysine residues in the UCS domain of myosin chaperone unc-45. By targeting myosin chaperone unc-45 for proteasomal degradation, regulates myosin assembly in body wall muscles in association with cdc-48.1 and chn-1. However, in a contrasting study, acts as an E3 ligase, independently of chn-1, to poly-ubiquitinate unc-45 without promoting unc-45 proteasomal degradation. Instead, uses unc-45 as an adapter protein to recruit and poly-ubiquitinate unfolded myosin heavy chain B unc-54. The sequence is that of Ubiquitin conjugation factor E4 ufd-2 from Caenorhabditis elegans.